Reading from the N-terminus, the 201-residue chain is Probable calcium-binding protein CML15 (201 aa).

The interval 1-55 (MGKVRAFFSRKGRGNSSGRSRSMREAAMNVDWSPRPSDLAAAAAAKPRPPAAEDE) is disordered. 4 consecutive EF-hand domains span residues 51-86 (AAEDETERVFRKFDANGDGRISRAELAALFRSVGHA), 87-122 (VTDDEVARMMQEADSDGDGYISLGEFAAISAPPPGD), 125-160 (AAEEDLRHAFGVFDADGNGVITPAELARVLRGIGEA), and 161-196 (ATVAQCRRMIDGVDRNGDGLINFEEFKLMMAAGAGF). Ca(2+) contacts are provided by D64, N66, D68, R70, E75, D100, D102, D104, Y106, E111, D138, D140, N142, E149, D174, N176, D178, and E185.

Functionally, potential calcium sensor. In Oryza sativa subsp. japonica (Rice), this protein is Probable calcium-binding protein CML15 (CML15).